The following is a 322-amino-acid chain: Ribose-phosphate pyrophosphokinase 1 (322 aa).

ATP-binding positions include Asp39 to Glu41 and Arg98 to Gln99. Mg(2+)-binding residues include His132 and Asp173. Residue Lys196 is part of the active site. D-ribose 5-phosphate contacts are provided by residues Arg198, Asp224, and Asp228–Thr232.

Belongs to the ribose-phosphate pyrophosphokinase family. Class I subfamily. Homohexamer. The cofactor is Mg(2+).

It localises to the cytoplasm. It carries out the reaction D-ribose 5-phosphate + ATP = 5-phospho-alpha-D-ribose 1-diphosphate + AMP + H(+). It participates in metabolic intermediate biosynthesis; 5-phospho-alpha-D-ribose 1-diphosphate biosynthesis; 5-phospho-alpha-D-ribose 1-diphosphate from D-ribose 5-phosphate (route I): step 1/1. Functionally, involved in the biosynthesis of the central metabolite phospho-alpha-D-ribosyl-1-pyrophosphate (PRPP) via the transfer of pyrophosphoryl group from ATP to 1-hydroxyl of ribose-5-phosphate (Rib-5-P). This is Ribose-phosphate pyrophosphokinase 1 from Streptococcus pneumoniae serotype 4 (strain ATCC BAA-334 / TIGR4).